A 207-amino-acid polypeptide reads, in one-letter code: Nuclear transcription factor Y subunit beta (207 aa).

Residues 1–52 (MTMDGDSSTTDASQLGISADYIGGSHYVIQPHDDTEDSMNDHEDTNGSKESF) are a domain. The interval 27–52 (YVIQPHDDTEDSMNDHEDTNGSKESF) is disordered. Residues 39–52 (MNDHEDTNGSKESF) show a composition bias toward basic and acidic residues. The b domain stretch occupies residues 53–142 (REQDIYLPIA…PLKLYLQKFR (90 aa)). The DNA-binding element occupies 59–65 (LPIANVA). The tract at residues 86 to 97 (VQECVSEFISFI) is subunit association domain (SAD). Lysine 140 participates in a covalent cross-link: Glycyl lysine isopeptide (Lys-Gly) (interchain with G-Cter in ubiquitin). The interval 143 to 207 (EAMKGEKGIG…ISGVQQIQFS (65 aa)) is c domain.

It belongs to the NFYB/HAP3 subunit family. As to quaternary structure, heterotrimeric transcription factor composed of three components, NF-YA, NF-YB and NF-YC. NF-YB and NF-YC must interact and dimerize for NF-YA association and DNA binding. Interacts with C1QBP. In terms of processing, monoubiquitination at Lys-140 plays an important role in transcriptional activation by allowing the deposition of histone H3 methylations as well as histone H2B monoubiquitination at 'Lys-121'.

The protein localises to the nucleus. Component of the sequence-specific heterotrimeric transcription factor (NF-Y) which specifically recognizes a 5'-CCAAT-3' box motif found in the promoters of its target genes. NF-Y can function as both an activator and a repressor, depending on its interacting cofactors. In Bos taurus (Bovine), this protein is Nuclear transcription factor Y subunit beta (NFYB).